The primary structure comprises 181 residues: Adenylate kinase (181 aa).

G10–T15 provides a ligand contact to ATP. The interval S30–V59 is NMP. AMP-binding positions include T31, R36, D57 to V59, G85 to R88, and Q92. The segment at G126–D132 is LID. ATP is bound at residue R127. AMP contacts are provided by R129 and R140. G166 contacts ATP.

This sequence belongs to the adenylate kinase family. As to quaternary structure, monomer.

The protein localises to the cytoplasm. The enzyme catalyses AMP + ATP = 2 ADP. Its pathway is purine metabolism; AMP biosynthesis via salvage pathway; AMP from ADP: step 1/1. Functionally, catalyzes the reversible transfer of the terminal phosphate group between ATP and AMP. Plays an important role in cellular energy homeostasis and in adenine nucleotide metabolism. The sequence is that of Adenylate kinase from Mycobacterium marinum (strain ATCC BAA-535 / M).